Consider the following 196-residue polypeptide: Imidazoleglycerol-phosphate dehydratase (196 aa).

Belongs to the imidazoleglycerol-phosphate dehydratase family.

The protein resides in the cytoplasm. It catalyses the reaction D-erythro-1-(imidazol-4-yl)glycerol 3-phosphate = 3-(imidazol-4-yl)-2-oxopropyl phosphate + H2O. Its pathway is amino-acid biosynthesis; L-histidine biosynthesis; L-histidine from 5-phospho-alpha-D-ribose 1-diphosphate: step 6/9. The protein is Imidazoleglycerol-phosphate dehydratase of Acidiphilium cryptum (strain JF-5).